The sequence spans 749 residues: Catalase-peroxidase (749 aa).

The tryptophyl-tyrosyl-methioninium (Trp-Tyr) (with M-260) cross-link spans 98 to 234 (WHAAGTYRVQ…LAASHMGLIY (137 aa)). The Proton acceptor role is filled by H99. Positions 234 to 260 (YVNPEGPNGEPDPVAAAHDIRTTFGRM) form a cross-link, tryptophyl-tyrosyl-methioninium (Tyr-Met) (with W-98). H275 contacts heme b.

Belongs to the peroxidase family. Peroxidase/catalase subfamily. As to quaternary structure, homodimer or homotetramer. Heme b serves as cofactor. In terms of processing, formation of the three residue Trp-Tyr-Met cross-link is important for the catalase, but not the peroxidase activity of the enzyme.

The protein resides in the cytoplasm. The enzyme catalyses H2O2 + AH2 = A + 2 H2O. It catalyses the reaction 2 H2O2 = O2 + 2 H2O. In terms of biological role, bifunctional enzyme with both catalase and broad-spectrum peroxidase activity. The sequence is that of Catalase-peroxidase from Mycosarcoma maydis (Corn smut fungus).